The following is an 876-amino-acid chain: Radial spoke head 10 homolog B (876 aa).

Basic and acidic residues-rich tracts occupy residues 1 to 16 and 57 to 66; these read MVKEKKKADKKGDKSA and PKRDSEHTYQ. Residues 1-72 are disordered; it reads MVKEKKKADK…HTYQSEDETQ (72 aa). 10 MORN repeats span residues 86 to 108, 109 to 131, 132 to 154, 155 to 177, 179 to 201, 204 to 226, 227 to 249, 251 to 273, 284 to 306, and 307 to 329; these read YEGEKVRGLYEGEGFAVFQGGNT, YHGMFSEGLMHGQGTYIWADGLK, YEGDFVKNIPMNHGVYTWPDGST, YEGEVVNGMRNGFGMFKCGTQPV, YIGHWCHGKRHGKGSIYYNQEGT, YEGDWVYNIKKGWGIRCYKSGNI, YEGQWENNMRHGEGRMRWLTTNE, YTGHWEKGIQNGFGTHTWFLKRI, YIGAFVNGFRHGQGKFYYASGAM, and YEGEWVSNKKQGRGRITFKNGRV. Disordered stretches follow at residues 360–386 and 841–876; these read SQRSRQARGSSVSADREPETLRKLDGS and EPPEVPAVQPLTPSPPKEDLVSMQTSKASPGKKKKK. The segment covering 373–386 has biased composition (basic and acidic residues); the sequence is ADREPETLRKLDGS. Residues 752–841 adopt a coiled-coil conformation; that stretch reads EKYEKSKDEQ…FELDITVLKE (90 aa).

Interacts with RSPH6A. Does not appear to be part of the axonemal radial spoke complexes 1 or 2.

It is found in the cytoplasm. The protein resides in the cytoskeleton. It localises to the cilium axoneme. The protein localises to the cell projection. Its subcellular location is the cilium. It is found in the flagellum. Its function is as follows. May function as part of the axonemal radial spoke complex 3 (RS3). Radial spoke complexes are important for ciliary motility. In Rattus norvegicus (Rat), this protein is Radial spoke head 10 homolog B (Rsph10b).